Consider the following 858-residue polypeptide: Rho GTPase-activating protein 17 (858 aa).

Residues 14–246 (QTVGRAEKTE…MRAHQDKWAE (233 aa)) enclose the BAR domain. The Rho-GAP domain maps to 252-442 (TPLEEHLKRS…PIIQHADWFF (191 aa)). The span at 459 to 475 (TPNSNHSSHTGNDSDSG) shows a compositional bias: polar residues. The tract at residues 459–482 (TPNSNHSSHTGNDSDSGTLERKRP) is disordered. Ser484 is modified (phosphoserine). A disordered region spans residues 516–823 (RKHISPAFQP…VTDTNSRVSE (308 aa)). Residues 543–552 (PSQSSRADSN) are compositionally biased toward polar residues. A compositionally biased stretch (low complexity) spans 553 to 563 (SVGGPVPSSSG). Position 575 is a phosphoserine (Ser575). The segment covering 592-617 (RNSNQITTVPNQAQTGGNSHQLSVGT) has biased composition (polar residues). Residues 637–650 (APAPPKPGNPPPGH) show a composition bias toward pro residues. Residues 653–702 (GQSSPGTGTSPKPSTRSPSPPQQQQQQQQQQQQQQQQQQQQQQQQQQQQQ) show a composition bias toward low complexity. Ser710 and Ser712 each carry phosphoserine. Composition is skewed to pro residues over residues 716–729 (IQAPNHPPPQPPTQ) and 738–756 (EPGPTPPQTPTPPSTPPPA). A phosphothreonine mark is found at Thr742, Thr746, and Thr748. Residues 742–755 (TPPQTPTPPSTPPP) carry the SH3-binding motif. Ser751 carries the phosphoserine modification. Thr752 carries the phosphothreonine modification. The span at 757-769 (KQNSSQSETTQLH) shows a compositional bias: polar residues. Over residues 784–794 (RPSVPPPPNPP) the composition is skewed to pro residues. A compositionally biased stretch (polar residues) spans 806 to 823 (SVPTASRIVTDTNSRVSE).

Component of a complex whose core is composed of ARHGAP17, AMOT, PALS1, PATJ and PARD3/PAR3. Interacts with NHERF1, FNBP1, TRIP10, CAPZA (CAPZA1, CAPZA2 or CAPZA3), CAPZB, CD2AP and SH3KBP1/CIN85. As to expression, highly expressed in brain; neuron-specific (at protein level). Isoform 2, isoform 3 and isoform 4 are predominantly expressed in neuronal tissues and correlate well with the differentiation of neurons, while isoform 1 is strongly expressed in embryonic brain.

The protein localises to the membrane. It is found in the cytoplasm. Its subcellular location is the cell junction. The protein resides in the tight junction. In terms of biological role, rho GTPase-activating protein involved in the maintenance of tight junction by regulating the activity of CDC42, thereby playing a central role in apical polarity of epithelial cells. Specifically acts as a GTPase activator for the CDC42 GTPase by converting it to an inactive GDP-bound state. The complex formed with AMOT acts by regulating the uptake of polarity proteins at tight junctions, possibly by deciding whether tight junction transmembrane proteins are recycled back to the plasma membrane or sent elsewhere. Participates in the Ca(2+)-dependent regulation of exocytosis, possibly by catalyzing GTPase activity of Rho family proteins and by inducing the reorganization of the cortical actin filaments. Acts as a GTPase activator in vitro for RAC1. The sequence is that of Rho GTPase-activating protein 17 (Arhgap17) from Rattus norvegicus (Rat).